We begin with the raw amino-acid sequence, 1767 residues long: E3 ubiquitin-protein ligase listerin (1767 aa).

HEAT repeat units follow at residues 59–96 (SLVD…ERDT), 100–138 (KGVL…KVKK), 273–314 (SAYF…VVCP), 335–372 (NAKK…KLPQ), 380–418 (DFFK…CLRF), 433–473 (LINE…KADA), and 509–547 (VKSV…NIPE). A disordered region spans residues 550-583 (KGDEKSMSSEGENSEGSDGGAQSPLSNTSSDLVS). Polar residues predominate over residues 572–581 (SPLSNTSSDL). HEAT repeat units follow at residues 621–658 (LDSF…KNPA), 676–714 (EDGG…KWSS), 1067–1104 (SETS…SSDE), 1183–1226 (QLLH…IMRF), 1315–1353 (GIHS…TLTY), 1378–1415 (EHLQ…ELPQ), and 1476–1513 (LGYL…LNKL). The segment at 1716-1763 (CMICFSVIHGFNYSLPKKACRTCKKKFHSACLYKWFTSSNKSTCPLCR) adopts an RING-type zinc-finger fold.

This sequence belongs to the LTN1 family. In terms of assembly, component of the ribosome quality control complex (RQC), composed of at least the E3 ubiquitin ligase LTN1 and NEMF associated with the 60S ribosomal subunit. The complex probably also contains TCF25 as well as VCP/p97 and its ubiquitin-binding cofactors. Autoubiquitinated. As to expression, widely expressed, including in the brain and spinal cord.

The protein localises to the cytoplasm. It is found in the cytosol. It catalyses the reaction S-ubiquitinyl-[E2 ubiquitin-conjugating enzyme]-L-cysteine + [acceptor protein]-L-lysine = [E2 ubiquitin-conjugating enzyme]-L-cysteine + N(6)-ubiquitinyl-[acceptor protein]-L-lysine.. Its pathway is protein modification; protein ubiquitination. In terms of biological role, E3 ubiquitin-protein ligase. component of the ribosome quality control complex (RQC), a ribosome-associated complex that mediates ubiquitination and extraction of incompletely synthesized nascent chains for proteasomal degradation. Within the RQC complex, LTN1 is recruited to stalled 60S ribosomal subunits by NEMF and mediates ubiquitination of stalled nascent chains. Ubiquitination leads to VCP/p97 recruitment for extraction and degradation of the incomplete translation product. This Mus musculus (Mouse) protein is E3 ubiquitin-protein ligase listerin (Ltn1).